The sequence spans 170 residues: Adenine phosphoribosyltransferase (170 aa).

The protein belongs to the purine/pyrimidine phosphoribosyltransferase family. As to quaternary structure, homodimer.

Its subcellular location is the cytoplasm. The enzyme catalyses AMP + diphosphate = 5-phospho-alpha-D-ribose 1-diphosphate + adenine. The protein operates within purine metabolism; AMP biosynthesis via salvage pathway; AMP from adenine: step 1/1. Functionally, catalyzes a salvage reaction resulting in the formation of AMP, that is energically less costly than de novo synthesis. This chain is Adenine phosphoribosyltransferase, found in Brachyspira hyodysenteriae (strain ATCC 49526 / WA1).